We begin with the raw amino-acid sequence, 310 residues long: N-acyl-aromatic-L-amino acid amidohydrolase (carboxylate-forming) (310 aa).

Positions 20 and 23 each coordinate Zn(2+). Substrate is bound by residues Arg62 and 69 to 70 (NR). Zn(2+) is bound at residue His113. Substrate-binding residues include Glu176 and Tyr286.

This sequence belongs to the AspA/AstE family. Aspartoacylase subfamily. In terms of assembly, homotetramer. Zn(2+) serves as cofactor.

The protein localises to the apical cell membrane. The protein resides in the cytoplasm. The catalysed reaction is an N-acyl-aromatic L-alpha-amino acid + H2O = an aromatic L-alpha-amino acid + a carboxylate. The enzyme catalyses an N-acetyl-L-cysteine-S-conjugate + H2O = an S-substituted L-cysteine + acetate. Functionally, plays an important role in deacetylating mercapturic acids in kidney proximal tubules. The polypeptide is N-acyl-aromatic-L-amino acid amidohydrolase (carboxylate-forming) (acy3) (Xenopus tropicalis (Western clawed frog)).